We begin with the raw amino-acid sequence, 429 residues long: Phosphoribosylamine--glycine ligase (429 aa).

Positions Lys-109–Asp-316 constitute an ATP-grasp domain. An ATP-binding site is contributed by Val-135–Ser-196. The disordered stretch occupies residues Ser-212 to Pro-235. The segment covering Gln-213 to Thr-223 has biased composition (basic and acidic residues). Mg(2+) is bound by residues Glu-286 and Asn-288.

It belongs to the GARS family. Mg(2+) is required as a cofactor. It depends on Mn(2+) as a cofactor.

It carries out the reaction 5-phospho-beta-D-ribosylamine + glycine + ATP = N(1)-(5-phospho-beta-D-ribosyl)glycinamide + ADP + phosphate + H(+). It functions in the pathway purine metabolism; IMP biosynthesis via de novo pathway; N(1)-(5-phospho-D-ribosyl)glycinamide from 5-phospho-alpha-D-ribose 1-diphosphate: step 2/2. The protein is Phosphoribosylamine--glycine ligase of Vibrio parahaemolyticus serotype O3:K6 (strain RIMD 2210633).